Consider the following 377-residue polypeptide: T-protein (377 aa).

The Chorismate mutase domain occupies 1 to 92 (MSFMEALKDL…ESYANENQFG (92 aa)). The 264-residue stretch at 101–364 (HKIVIVGGYG…DYSEQFLKES (264 aa)) folds into the Prephenate/arogenate dehydrogenase domain.

The protein in the C-terminal section; belongs to the prephenate/arogenate dehydrogenase family.

Its subcellular location is the cytoplasm. It carries out the reaction chorismate = prephenate. The catalysed reaction is prephenate + NAD(+) = 3-(4-hydroxyphenyl)pyruvate + CO2 + NADH. Its pathway is amino-acid biosynthesis; L-tyrosine biosynthesis; (4-hydroxyphenyl)pyruvate from prephenate (NAD(+) route): step 1/1. The protein operates within metabolic intermediate biosynthesis; prephenate biosynthesis; prephenate from chorismate: step 1/1. This is T-protein (tyrA) from Haemophilus influenzae (strain ATCC 51907 / DSM 11121 / KW20 / Rd).